A 483-amino-acid polypeptide reads, in one-letter code: Aspartyl/glutamyl-tRNA(Asn/Gln) amidotransferase subunit B (483 aa).

Belongs to the GatB/GatE family. GatB subfamily. In terms of assembly, heterotrimer of A, B and C subunits.

The catalysed reaction is L-glutamyl-tRNA(Gln) + L-glutamine + ATP + H2O = L-glutaminyl-tRNA(Gln) + L-glutamate + ADP + phosphate + H(+). The enzyme catalyses L-aspartyl-tRNA(Asn) + L-glutamine + ATP + H2O = L-asparaginyl-tRNA(Asn) + L-glutamate + ADP + phosphate + 2 H(+). Its function is as follows. Allows the formation of correctly charged Asn-tRNA(Asn) or Gln-tRNA(Gln) through the transamidation of misacylated Asp-tRNA(Asn) or Glu-tRNA(Gln) in organisms which lack either or both of asparaginyl-tRNA or glutaminyl-tRNA synthetases. The reaction takes place in the presence of glutamine and ATP through an activated phospho-Asp-tRNA(Asn) or phospho-Glu-tRNA(Gln). This Rickettsia rickettsii (strain Sheila Smith) protein is Aspartyl/glutamyl-tRNA(Asn/Gln) amidotransferase subunit B.